The sequence spans 101 residues: MFAIIETGGKQIIVKAGDTIFIEKIEGKEGDKVSFDKVLAINDKIGTPYLENAAVLAAIEKQGKAKKIVVYRHNAKSTHKRKLGHRQPYTRVKILEIKEAK.

Belongs to the bacterial ribosomal protein bL21 family. As to quaternary structure, part of the 50S ribosomal subunit. Contacts protein L20.

This protein binds to 23S rRNA in the presence of protein L20. In Metamycoplasma arthritidis (strain 158L3-1) (Mycoplasma arthritidis), this protein is Large ribosomal subunit protein bL21.